Reading from the N-terminus, the 454-residue chain is Exopolyphosphatase PRUNE1 (454 aa).

An N-acetylmethionine modification is found at Met-1. Mn(2+)-binding residues include Asp-28, Asp-30, Asp-106, and Asp-179. The DHH motif motif lies at 106–108 (DHH). An essential for homodimerization region spans residues 394 to 421 (SLISGLSQDEEDPPLPPTPMNSLVDECP). The tract at residues 397–420 (SGLSQDEEDPPLPPTPMNSLVDEC) is disordered. Ser-400 bears the Phosphoserine mark. Residue Thr-411 is modified to Phosphothreonine. Residue Ser-415 is modified to Phosphoserine.

It belongs to the PPase class C family. Prune subfamily. As to quaternary structure, homooligomer. Able to homodimerize via its C-terminal domain. Interacts with NME1. Interacts with GSK3; at focal adhesion complexes where paxillin and vinculin are colocalized. Interacts with alpha and beta tubulin. The cofactor is Mn(2+).

The protein localises to the cytoplasm. It is found in the nucleus. The protein resides in the cell junction. Its subcellular location is the focal adhesion. It catalyses the reaction diphosphate + H2O = 2 phosphate + H(+). Its activity is regulated as follows. Activated by magnesium ions and inhibited by manganese ions. Inhibited by dipyridamole, moderately sensitive to IBMX and inhibited by vinpocetine. Phosphodiesterase (PDE) that has higher activity toward cAMP than cGMP, as substrate. Plays a role in cell proliferation, migration and differentiation, and acts as a negative regulator of NME1. Plays a role in the regulation of neurogenesis. Involved in the regulation of microtubule polymerization. The chain is Exopolyphosphatase PRUNE1 (Prune1) from Mus musculus (Mouse).